We begin with the raw amino-acid sequence, 153 residues long: Histone H2A (153 aa).

Disordered stretches follow at residues 1–27 (MDTG…VSRS) and 131–153 (KAAA…PKKA). The segment covering 132-147 (AAAAATKEPKSPAKAT) has biased composition (low complexity). The SPKK motif signature appears at 149–152 (SPKK).

This sequence belongs to the histone H2A family. The nucleosome is a histone octamer containing two molecules each of H2A, H2B, H3 and H4 assembled in one H3-H4 heterotetramer and two H2A-H2B heterodimers. The octamer wraps approximately 147 bp of DNA.

It localises to the nucleus. The protein resides in the chromosome. Core component of nucleosome. Nucleosomes wrap and compact DNA into chromatin, limiting DNA accessibility to the cellular machineries which require DNA as a template. Histones thereby play a central role in transcription regulation, DNA repair, DNA replication and chromosomal stability. DNA accessibility is regulated via a complex set of post-translational modifications of histones, also called histone code, and nucleosome remodeling. This is Histone H2A from Euphorbia esula (Leafy spurge).